The following is a 734-amino-acid chain: Elongation factor G, mitochondrial (734 aa).

The transit peptide at 1-32 directs the protein to the mitochondrion; it reads MTSFLTSRFGGLALRNVMNNKNGINSFGLRCF. The 281-residue stretch at 38–318 folds into the tr-type G domain; that stretch reads SGLRNIGISA…GVIKYLPSPN (281 aa). GTP is bound by residues 47-54, 114-118, and 168-171; these read AHIDSGKT, DTPGH, and NKLD.

Belongs to the TRAFAC class translation factor GTPase superfamily. Classic translation factor GTPase family. EF-G/EF-2 subfamily.

The protein localises to the mitochondrion. It catalyses the reaction GTP + H2O = GDP + phosphate + H(+). Its pathway is protein biosynthesis; polypeptide chain elongation. Mitochondrial GTPase that catalyzes the GTP-dependent ribosomal translocation step during translation elongation. During this step, the ribosome changes from the pre-translocational (PRE) to the post-translocational (POST) state as the newly formed A-site-bound peptidyl-tRNA and P-site-bound deacylated tRNA move to the P and E sites, respectively. Catalyzes the coordinated movement of the two tRNA molecules, the mRNA and conformational changes in the ribosome. The chain is Elongation factor G, mitochondrial (gfm1) from Dictyostelium discoideum (Social amoeba).